Consider the following 560-residue polypeptide: Thermosome subunit alpha (560 aa).

Residues 535-547 are compositionally biased toward basic and acidic residues; that stretch reads SEKKGGEGSKEES. Positions 535-560 are disordered; the sequence is SEKKGGEGSKEESGGEGGAGTPSLGD.

The protein belongs to the TCP-1 chaperonin family. As to quaternary structure, forms a heterooligomeric complex of two stacked nine-membered rings; one of alpha and the other of beta subunits. Sometimes called a 'rosettasome'.

The protein resides in the cytoplasm. It catalyses the reaction ATP + H2O = ADP + phosphate + H(+). Its function is as follows. Molecular chaperone; binds unfolded polypeptides in vitro, stimulates protein folding and has ATPase activity. One of the most abundant proteins in the cell at all temperatures. This chain is Thermosome subunit alpha (thsA), found in Saccharolobus shibatae (strain ATCC 51178 / DSM 5389 / JCM 8931 / NBRC 15437 / B12) (Sulfolobus shibatae).